A 765-amino-acid polypeptide reads, in one-letter code: Protein transport protein Sec23A (765 aa).

The residue at position 2 (threonine 2) is an N-acetylthreonine. Zn(2+) contacts are provided by cysteine 61, cysteine 66, cysteine 85, and cysteine 88. Phosphothreonine is present on threonine 308. The stretch at 632-718 is one Gelsolin-like repeat; it reads PEPVLLDSSS…EHGGSQARFL (87 aa).

This sequence belongs to the SEC23/SEC24 family. SEC23 subfamily. As to quaternary structure, COPII is composed of at least five proteins: the Sec23/24 complex, the Sec13/31 complex and Sar1. Interacts with SEC23IP. Interacts with HTR4. Interacts with SEC16A. Interacts with SLC6A4. Interacts (as part of the Sec23/24 complex) with SEC22B; recruits SEC22B into COPII-coated vesicles and allows the transport of this cargo from the endoplasmic reticulum to the Golgi. Interacts (via Gelsolin-like repeat) with MIA2 and MIA3; specifically involved in the transport of large cargos like the collagen COL7A1. Interacts with DDHD1. Interacts with TMEM39A. Interacts with SACM1L; this interaction is reduced in the absence of TMEM39A. Interacts with kinase FAM20C; transport of FAM20C from the endoplasmic reticulum to the Golgi is likely to be mediated by COPII vesicles.

It localises to the cytoplasmic vesicle. It is found in the COPII-coated vesicle membrane. Its subcellular location is the endoplasmic reticulum membrane. The protein resides in the cytoplasm. The protein localises to the cytosol. In terms of biological role, component of the coat protein complex II (COPII) which promotes the formation of transport vesicles from the endoplasmic reticulum (ER). The coat has two main functions, the physical deformation of the endoplasmic reticulum membrane into vesicles and the selection of cargo molecules for their transport to the Golgi complex. Required for the translocation of insulin-induced glucose transporter SLC2A4/GLUT4 to the cell membrane. The polypeptide is Protein transport protein Sec23A (Pongo abelii (Sumatran orangutan)).